A 72-amino-acid polypeptide reads, in one-letter code: Gene 42 protein (72 aa).

The protein is Gene 42 protein (42) of Mycobacterium phage L5 (Mycobacteriophage L5).